Reading from the N-terminus, the 851-residue chain is Transcriptional regulator RFX1 (851 aa).

2 stretches are compositionally biased toward polar residues: residues M1–N11 and P20–P34. Disordered regions lie at residues M1–P121, Q134–Y170, and H195–N230. Residues Q38–Q53 show a composition bias toward basic and acidic residues. Positions Q54–S84 are enriched in low complexity. A compositionally biased stretch (polar residues) spans K85 to P114. Positions Y141–Y170 are enriched in low complexity. The segment covering S199–P211 has biased composition (polar residues). The segment at residues G282–G357 is a DNA-binding region (RFX-type winged-helix). 2 disordered regions span residues Y368–Y411 and P783–Q806. A compositionally biased stretch (polar residues) spans A384 to A393. The segment covering P783–P797 has biased composition (low complexity).

The protein belongs to the RFX family.

It localises to the nucleus. Functionally, transcription factor involved in DNA damage responses, morphogenesis, and virulence. This Candida albicans (strain SC5314 / ATCC MYA-2876) (Yeast) protein is Transcriptional regulator RFX1 (RFX1).